A 94-amino-acid chain; its full sequence is Signal peptidase complex subunit 1 (94 aa).

N-acetylserine is present on serine 2. Over 2–28 (SEILQDVQRKLVFPIDFPSQRKTEKFQ) the chain is Cytoplasmic. A helical transmembrane segment spans residues 29-49 (QLSLMIGALVACILGFAQQSL). Lysine 50 is a topological domain (lumenal). Residues 51–71 (VLLTAYGISCVITLICVLPAY) traverse the membrane as a helical segment. The Cytoplasmic portion of the chain corresponds to 72-94 (PWYNKQKLRWAQPKIEINVDQYD).

The protein belongs to the SPCS1 family. Component of the signal peptidase complex (SPC) composed of a catalytic subunit SEC11 and three accessory subunits SPC1, SPC2 and SPC3. The complex induces a local thinning of the ER membrane which is used to measure the length of the signal peptide (SP) h-region of protein substrates. This ensures the selectivity of the complex towards h-regions shorter than 18-20 amino acids. SPC associates with the translocon complex. Interacts with SBH1 and SEB2/SBH2.

It localises to the endoplasmic reticulum membrane. Component of the signal peptidase complex (SPC) which catalyzes the cleavage of N-terminal signal sequences from nascent proteins as they are translocated into the lumen of the endoplasmic reticulum. Dispensable for SPC enzymatic activity. The protein is Signal peptidase complex subunit 1 (SPC1) of Saccharomyces cerevisiae (strain ATCC 204508 / S288c) (Baker's yeast).